Consider the following 796-residue polypeptide: Protein tyrosine phosphatase domain-containing protein 1 (796 aa).

Residues 126–297 (YSSWVTDNIL…LIPLRNIFSC (172 aa)) form the Tyrosine-protein phosphatase domain. Catalysis depends on cysteine 234, which acts as the Phosphocysteine intermediate. 2 positions are modified to phosphoserine: serine 435 and serine 437.

It belongs to the protein-tyrosine phosphatase family. Non-receptor class PTPDC1 subfamily.

May play roles in cilia formation and/or maintenance. The sequence is that of Protein tyrosine phosphatase domain-containing protein 1 (PTPDC1) from Bos taurus (Bovine).